A 485-amino-acid polypeptide reads, in one-letter code: NADH-quinone oxidoreductase subunit N (485 aa).

Transmembrane regions (helical) follow at residues Leu-8 to Ile-28, Phe-35 to Val-55, Gly-71 to Ala-91, Phe-105 to Leu-125, Thr-127 to Phe-147, Tyr-159 to Ala-179, Leu-203 to Phe-223, Pro-235 to Met-255, Val-271 to Gln-291, Leu-297 to Gln-317, Val-326 to Leu-346, Ala-373 to Ile-393, Trp-408 to Val-430, and Ile-455 to Ile-475.

This sequence belongs to the complex I subunit 2 family. As to quaternary structure, NDH-1 is composed of 13 different subunits. Subunits NuoA, H, J, K, L, M, N constitute the membrane sector of the complex.

Its subcellular location is the cell inner membrane. It catalyses the reaction a quinone + NADH + 5 H(+)(in) = a quinol + NAD(+) + 4 H(+)(out). NDH-1 shuttles electrons from NADH, via FMN and iron-sulfur (Fe-S) centers, to quinones in the respiratory chain. The immediate electron acceptor for the enzyme in this species is believed to be ubiquinone. Couples the redox reaction to proton translocation (for every two electrons transferred, four hydrogen ions are translocated across the cytoplasmic membrane), and thus conserves the redox energy in a proton gradient. This Salmonella paratyphi A (strain ATCC 9150 / SARB42) protein is NADH-quinone oxidoreductase subunit N.